We begin with the raw amino-acid sequence, 115 residues long: Ig heavy chain V region PJ14 (115 aa).

Positions 1–19 (MAVLALLFCLVTFPSCILS) are cleaved as a signal peptide. Positions 20–115 (QVQLKESGPG…TDDTARYYCA (96 aa)) constitute an Ig-like domain.

The sequence is that of Ig heavy chain V region PJ14 from Mus musculus (Mouse).